A 387-amino-acid chain; its full sequence is Early growth response protein 3 (387 aa).

The tract at residues 241–283 (PGFGSLPQPPLTLKPIRPRKYPNRPSKTPLHERPHACPAEGCD) is disordered. Basic and acidic residues predominate over residues 269 to 283 (PLHERPHACPAEGCD). 3 C2H2-type zinc fingers span residues 275–299 (HACP…LRIH), 305–327 (FQCR…IRTH), and 333–355 (FACE…AKIH). The segment at 348-387 (RKRHAKIHLKQKEKKAEKGGAPSASSAPPVSLAPVVTTCA) is disordered. Positions 350-360 (RHAKIHLKQKE) are enriched in basic residues. Residues 368–387 (APSASSAPPVSLAPVVTTCA) show a composition bias toward low complexity.

It belongs to the EGR C2H2-type zinc-finger protein family.

The protein localises to the nucleus. In terms of biological role, probable transcription factor involved in muscle spindle development. The chain is Early growth response protein 3 (EGR3) from Homo sapiens (Human).